The primary structure comprises 246 residues: MTGHWSYCDDDECGPNRWPTGQHQSPINIDLGEVERKDTHDGIKFVNYDHPIQGDIVNNGHSVQMTPELRSEHPEIYGGGLDQVYRLVQYHFHWGENDNEGSEHTLGGLRYPAELHLVHQGVEDPGKLAVVGVFLQLGKEGKALSNEERVLGKLCNPETVTRVENVRLSEKLPANKRSFWRYEGSLTTPPCSEIVTWTIFTEPVTVTHDQLELFRQVQDIEKRPIKKNYRPTQNLNDRKIVHIVAN.

One can recognise an Alpha-carbonic anhydrase domain in the interval 3–244 (GHWSYCDDDE…LNDRKIVHIV (242 aa)). Residue His-61 is the Proton acceptor of the active site. Zn(2+)-binding residues include His-91, His-93, and His-116. Residue 187–188 (TT) coordinates substrate.

It belongs to the alpha-carbonic anhydrase family. Zn(2+) is required as a cofactor.

It catalyses the reaction hydrogencarbonate + H(+) = CO2 + H2O. In terms of biological role, reversible hydration of carbon dioxide. This Caenorhabditis elegans protein is Putative carbonic anhydrase 3 (cah-3).